A 160-amino-acid polypeptide reads, in one-letter code: SsrA-binding protein (160 aa).

This sequence belongs to the SmpB family.

It is found in the cytoplasm. Its function is as follows. Required for rescue of stalled ribosomes mediated by trans-translation. Binds to transfer-messenger RNA (tmRNA), required for stable association of tmRNA with ribosomes. tmRNA and SmpB together mimic tRNA shape, replacing the anticodon stem-loop with SmpB. tmRNA is encoded by the ssrA gene; the 2 termini fold to resemble tRNA(Ala) and it encodes a 'tag peptide', a short internal open reading frame. During trans-translation Ala-aminoacylated tmRNA acts like a tRNA, entering the A-site of stalled ribosomes, displacing the stalled mRNA. The ribosome then switches to translate the ORF on the tmRNA; the nascent peptide is terminated with the 'tag peptide' encoded by the tmRNA and targeted for degradation. The ribosome is freed to recommence translation, which seems to be the essential function of trans-translation. The polypeptide is SsrA-binding protein (Mycobacterium bovis (strain ATCC BAA-935 / AF2122/97)).